We begin with the raw amino-acid sequence, 309 residues long: Glutaminase (309 aa).

Substrate contacts are provided by Ser65, Asn117, Glu162, Asn169, Tyr193, Tyr245, and Val263.

Belongs to the glutaminase family. As to quaternary structure, homotetramer.

It carries out the reaction L-glutamine + H2O = L-glutamate + NH4(+). This chain is Glutaminase, found in Clostridioides difficile (strain 630) (Peptoclostridium difficile).